Here is a 261-residue protein sequence, read N- to C-terminus: Ethanolamine ammonia-lyase small subunit (261 aa).

3 residues coordinate adenosylcob(III)alamin: Val-157, Glu-178, and Cys-207.

This sequence belongs to the EutC family. In terms of assembly, the basic unit is a heterodimer which dimerizes to form tetramers. The heterotetramers trimerize; 6 large subunits form a core ring with 6 small subunits projecting outwards. The cofactor is adenosylcob(III)alamin.

The protein resides in the bacterial microcompartment. It catalyses the reaction ethanolamine = acetaldehyde + NH4(+). It participates in amine and polyamine degradation; ethanolamine degradation. Catalyzes the deamination of various vicinal amino-alcohols to oxo compounds. Allows this organism to utilize ethanolamine as the sole source of nitrogen and carbon in the presence of external vitamin B12. The protein is Ethanolamine ammonia-lyase small subunit of Rhodopseudomonas palustris (strain BisA53).